A 209-amino-acid polypeptide reads, in one-letter code: Outer-membrane lipoprotein carrier protein (209 aa).

The signal sequence occupies residues 1-22 (MKKLLLTLAMVPAVLFSPTAWG).

This sequence belongs to the LolA family. As to quaternary structure, monomer.

Its subcellular location is the periplasm. In terms of biological role, participates in the translocation of lipoproteins from the inner membrane to the outer membrane. Only forms a complex with a lipoprotein if the residue after the N-terminal Cys is not an aspartate (The Asp acts as a targeting signal to indicate that the lipoprotein should stay in the inner membrane). The sequence is that of Outer-membrane lipoprotein carrier protein from Alcanivorax borkumensis (strain ATCC 700651 / DSM 11573 / NCIMB 13689 / SK2).